The chain runs to 388 residues: Chorismate synthase (388 aa).

NADP(+) contacts are provided by R39 and R45. Positions 95-118 (EKNEKSRRVSRPRPGHADLVGGMK) are disordered. Residues 130-132 (RSS), 251-252 (NA), G296, 311-315 (KPIPT), and R337 contribute to the FMN site.

It belongs to the chorismate synthase family. As to quaternary structure, homotetramer. FMNH2 is required as a cofactor.

It catalyses the reaction 5-O-(1-carboxyvinyl)-3-phosphoshikimate = chorismate + phosphate. It participates in metabolic intermediate biosynthesis; chorismate biosynthesis; chorismate from D-erythrose 4-phosphate and phosphoenolpyruvate: step 7/7. Its function is as follows. Catalyzes the anti-1,4-elimination of the C-3 phosphate and the C-6 proR hydrogen from 5-enolpyruvylshikimate-3-phosphate (EPSP) to yield chorismate, which is the branch point compound that serves as the starting substrate for the three terminal pathways of aromatic amino acid biosynthesis. This reaction introduces a second double bond into the aromatic ring system. This Listeria monocytogenes serotype 4b (strain F2365) protein is Chorismate synthase.